The following is a 340-amino-acid chain: UDP-3-O-acylglucosamine N-acyltransferase (340 aa).

His-240 (proton acceptor) is an active-site residue.

It belongs to the transferase hexapeptide repeat family. LpxD subfamily. As to quaternary structure, homotrimer.

It carries out the reaction a UDP-3-O-[(3R)-3-hydroxyacyl]-alpha-D-glucosamine + a (3R)-hydroxyacyl-[ACP] = a UDP-2-N,3-O-bis[(3R)-3-hydroxyacyl]-alpha-D-glucosamine + holo-[ACP] + H(+). It functions in the pathway bacterial outer membrane biogenesis; LPS lipid A biosynthesis. In terms of biological role, catalyzes the N-acylation of UDP-3-O-acylglucosamine using 3-hydroxyacyl-ACP as the acyl donor. Is involved in the biosynthesis of lipid A, a phosphorylated glycolipid that anchors the lipopolysaccharide to the outer membrane of the cell. This chain is UDP-3-O-acylglucosamine N-acyltransferase, found in Pseudoalteromonas translucida (strain TAC 125).